The following is a 252-amino-acid chain: Imidazole glycerol phosphate synthase subunit HisF (252 aa).

Active-site residues include D11 and D130.

Belongs to the HisA/HisF family. Heterodimer of HisH and HisF.

It is found in the cytoplasm. The enzyme catalyses 5-[(5-phospho-1-deoxy-D-ribulos-1-ylimino)methylamino]-1-(5-phospho-beta-D-ribosyl)imidazole-4-carboxamide + L-glutamine = D-erythro-1-(imidazol-4-yl)glycerol 3-phosphate + 5-amino-1-(5-phospho-beta-D-ribosyl)imidazole-4-carboxamide + L-glutamate + H(+). Its pathway is amino-acid biosynthesis; L-histidine biosynthesis; L-histidine from 5-phospho-alpha-D-ribose 1-diphosphate: step 5/9. Functionally, IGPS catalyzes the conversion of PRFAR and glutamine to IGP, AICAR and glutamate. The HisF subunit catalyzes the cyclization activity that produces IGP and AICAR from PRFAR using the ammonia provided by the HisH subunit. In Thermococcus kodakarensis (strain ATCC BAA-918 / JCM 12380 / KOD1) (Pyrococcus kodakaraensis (strain KOD1)), this protein is Imidazole glycerol phosphate synthase subunit HisF.